Here is a 201-residue protein sequence, read N- to C-terminus: Sec-independent protein translocase protein TatB (201 aa).

Residues 1-21 (MLDLGWSEILVIAVVLIVVVG) form a helical membrane-spanning segment. A disordered region spans residues 96–201 (LSEAAKAKPA…RRKKTAGTAP (106 aa)). 2 stretches are compositionally biased toward low complexity: residues 102 to 114 (AKPAASSLPAADS) and 159 to 187 (TSAKQAAPKAKAAAAAKAPTKNTASAPAK). Residues 189 to 201 (PSPRRKKTAGTAP) show a composition bias toward basic residues.

It belongs to the TatB family. In terms of assembly, the Tat system comprises two distinct complexes: a TatABC complex, containing multiple copies of TatA, TatB and TatC subunits, and a separate TatA complex, containing only TatA subunits. Substrates initially bind to the TatABC complex, which probably triggers association of the separate TatA complex to form the active translocon.

Its subcellular location is the cell inner membrane. In terms of biological role, part of the twin-arginine translocation (Tat) system that transports large folded proteins containing a characteristic twin-arginine motif in their signal peptide across membranes. Together with TatC, TatB is part of a receptor directly interacting with Tat signal peptides. TatB may form an oligomeric binding site that transiently accommodates folded Tat precursor proteins before their translocation. In Chelativorans sp. (strain BNC1), this protein is Sec-independent protein translocase protein TatB.